Here is a 60-residue protein sequence, read N- to C-terminus: Cytotoxin 5 (60 aa).

4 disulfide bridges follow: C3–C21, C14–C38, C42–C53, and C54–C59.

Belongs to the three-finger toxin family. Short-chain subfamily. Type IA cytotoxin sub-subfamily. As to quaternary structure, monomer in solution; Homodimer and oligomer in the presence of negatively charged lipids forming a pore with a size ranging between 20 and 30 Angstroms. Expressed by the venom gland.

Its subcellular location is the secreted. It localises to the target cell membrane. In terms of biological role, shows cytolytic activity on many different cells by forming pore in lipid membranes. In vivo, increases heart rate or kills the animal by cardiac arrest. In addition, it binds to heparin with high affinity, interacts with Kv channel-interacting protein 1 (KCNIP1) in a calcium-independent manner, and binds to integrin alpha-V/beta-3 (ITGAV/ITGB3) with moderate affinity. The polypeptide is Cytotoxin 5 (Naja mossambica (Mozambique spitting cobra)).